The following is a 155-amino-acid chain: S-ribosylhomocysteine lyase (155 aa).

Fe cation is bound by residues His57, His61, and Cys124.

Belongs to the LuxS family. Homodimer. Fe cation is required as a cofactor.

The catalysed reaction is S-(5-deoxy-D-ribos-5-yl)-L-homocysteine = (S)-4,5-dihydroxypentane-2,3-dione + L-homocysteine. Its function is as follows. Involved in the synthesis of autoinducer 2 (AI-2) which is secreted by bacteria and is used to communicate both the cell density and the metabolic potential of the environment. The regulation of gene expression in response to changes in cell density is called quorum sensing. Catalyzes the transformation of S-ribosylhomocysteine (RHC) to homocysteine (HC) and 4,5-dihydroxy-2,3-pentadione (DPD). This Listeria monocytogenes serovar 1/2a (strain ATCC BAA-679 / EGD-e) protein is S-ribosylhomocysteine lyase.